The chain runs to 93 residues: UPF0058 protein AF_0738 (93 aa).

It belongs to the UPF0058 family.

The chain is UPF0058 protein AF_0738 from Archaeoglobus fulgidus (strain ATCC 49558 / DSM 4304 / JCM 9628 / NBRC 100126 / VC-16).